Here is a 357-residue protein sequence, read N- to C-terminus: Peptide chain release factor 1 (357 aa).

N5-methylglutamine is present on Gln233.

The protein belongs to the prokaryotic/mitochondrial release factor family. Post-translationally, methylated by PrmC. Methylation increases the termination efficiency of RF1.

Its subcellular location is the cytoplasm. Its function is as follows. Peptide chain release factor 1 directs the termination of translation in response to the peptide chain termination codons UAG and UAA. This is Peptide chain release factor 1 from Flavobacterium psychrophilum (strain ATCC 49511 / DSM 21280 / CIP 103535 / JIP02/86).